The following is an 88-amino-acid chain: Small ribosomal subunit protein uS15 (88 aa).

Belongs to the universal ribosomal protein uS15 family. In terms of assembly, part of the 30S ribosomal subunit. Forms a bridge to the 50S subunit in the 70S ribosome, contacting the 23S rRNA.

Its function is as follows. One of the primary rRNA binding proteins, it binds directly to 16S rRNA where it helps nucleate assembly of the platform of the 30S subunit by binding and bridging several RNA helices of the 16S rRNA. In terms of biological role, forms an intersubunit bridge (bridge B4) with the 23S rRNA of the 50S subunit in the ribosome. The protein is Small ribosomal subunit protein uS15 of Borrelia turicatae (strain 91E135).